The primary structure comprises 206 residues: Small ribosomal subunit protein uS4 (206 aa).

Residues 96–157 (CRLDNVVYRM…KCRNQLRIAQ (62 aa)) form the S4 RNA-binding domain.

The protein belongs to the universal ribosomal protein uS4 family. In terms of assembly, part of the 30S ribosomal subunit. Contacts protein S5. The interaction surface between S4 and S5 is involved in control of translational fidelity.

Its function is as follows. One of the primary rRNA binding proteins, it binds directly to 16S rRNA where it nucleates assembly of the body of the 30S subunit. Functionally, with S5 and S12 plays an important role in translational accuracy. This Stutzerimonas stutzeri (strain A1501) (Pseudomonas stutzeri) protein is Small ribosomal subunit protein uS4.